A 130-amino-acid chain; its full sequence is Small ribosomal subunit protein uS8A (130 aa).

Belongs to the universal ribosomal protein uS8 family. As to quaternary structure, component of the small ribosomal subunit (SSU). Mature yeast ribosomes consist of a small (40S) and a large (60S) subunit. The 40S small subunit contains 1 molecule of ribosomal RNA (18S rRNA) and at least 33 different proteins. The large 60S subunit contains 3 rRNA molecules (25S, 5.8S and 5S rRNA) and at least 46 different proteins.

It localises to the cytoplasm. Its subcellular location is the nucleus. In terms of biological role, component of the ribosome, a large ribonucleoprotein complex responsible for the synthesis of proteins in the cell. The small ribosomal subunit (SSU) binds messenger RNAs (mRNAs) and translates the encoded message by selecting cognate aminoacyl-transfer RNA (tRNA) molecules. The large subunit (LSU) contains the ribosomal catalytic site termed the peptidyl transferase center (PTC), which catalyzes the formation of peptide bonds, thereby polymerizing the amino acids delivered by tRNAs into a polypeptide chain. The nascent polypeptides leave the ribosome through a tunnel in the LSU and interact with protein factors that function in enzymatic processing, targeting, and the membrane insertion of nascent chains at the exit of the ribosomal tunnel. In Schizosaccharomyces pombe (strain 972 / ATCC 24843) (Fission yeast), this protein is Small ribosomal subunit protein uS8A (rps2201).